Consider the following 302-residue polypeptide: Ornithine carbamoyltransferase (302 aa).

Carbamoyl phosphate is bound by residues 52–55 (STRT), Gln-79, Arg-103, and 130–133 (HPCQ). L-ornithine is bound by residues Asn-161, Asp-221, and 225–226 (SM). Carbamoyl phosphate-binding positions include 261–262 (CL) and Arg-289.

This sequence belongs to the aspartate/ornithine carbamoyltransferase superfamily. OTCase family.

The protein resides in the cytoplasm. The enzyme catalyses carbamoyl phosphate + L-ornithine = L-citrulline + phosphate + H(+). It functions in the pathway amino-acid biosynthesis; L-arginine biosynthesis; L-arginine from L-ornithine and carbamoyl phosphate: step 1/3. Its function is as follows. Reversibly catalyzes the transfer of the carbamoyl group from carbamoyl phosphate (CP) to the N(epsilon) atom of ornithine (ORN) to produce L-citrulline. In Methanosarcina mazei (strain ATCC BAA-159 / DSM 3647 / Goe1 / Go1 / JCM 11833 / OCM 88) (Methanosarcina frisia), this protein is Ornithine carbamoyltransferase.